Reading from the N-terminus, the 229-residue chain is Type-5 uracil-DNA glycosylase (229 aa).

Positions 19, 22, 123, and 138 each coordinate [4Fe-4S] cluster.

Belongs to the uracil-DNA glycosylase (UDG) superfamily. Type 5 (UDGb) family.

DNA glycosylase with broad substrate specificity. The sequence is that of Type-5 uracil-DNA glycosylase from Mycobacterium leprae (strain TN).